Here is a 598-residue protein sequence, read N- to C-terminus: Aspartate--tRNA(Asp/Asn) ligase (598 aa).

Glu-177 contributes to the L-aspartate binding site. The segment at 201–204 is aspartate; the sequence is QLFK. Residue Arg-223 participates in L-aspartate binding. Residues 223–225 and Gln-232 contribute to the ATP site; that span reads RDE. His-456 is a binding site for L-aspartate. Glu-493 lines the ATP pocket. Arg-500 contacts L-aspartate. 545–548 contacts ATP; sequence GVDR.

The protein belongs to the class-II aminoacyl-tRNA synthetase family. Type 1 subfamily. In terms of assembly, homodimer.

It localises to the cytoplasm. The enzyme catalyses tRNA(Asx) + L-aspartate + ATP = L-aspartyl-tRNA(Asx) + AMP + diphosphate. In terms of biological role, aspartyl-tRNA synthetase with relaxed tRNA specificity since it is able to aspartylate not only its cognate tRNA(Asp) but also tRNA(Asn). Reaction proceeds in two steps: L-aspartate is first activated by ATP to form Asp-AMP and then transferred to the acceptor end of tRNA(Asp/Asn). This Prochlorococcus marinus subsp. pastoris (strain CCMP1986 / NIES-2087 / MED4) protein is Aspartate--tRNA(Asp/Asn) ligase.